A 456-amino-acid chain; its full sequence is MKIEEVKSTVKTQRIAAHSHVKGLGLDENGVPLQMAAGLVGQKDAREAAGIVVDLIKSKKMSGRALLLAGPPGTGKTAIALAIAQELGNKVPFCPMVGSEVFSSEIKKTEVLMENFRRSIGLRIRETKEVYEGEVTELTPVETENPMGGYGKTISNVVIGLKTAKGTKQLKLDPSIYESLQKEKVEVGDVIYIEANSGAVKRQGRSDTFATEFDLETEEYVPLPKGDVHKKKEVVQDVTLHDLDVANARPQGGQDVLSMVGQIMKPKKTEITDKLRMEINKVVNKYIDQGIAELVPGVLFIDEVHMLDLECFTYLHKSLESAIAPIVIFATNRGRCVIRGTDDIISPHGIPLDLLDRLLIVRTAPYNLSEIEQIIKLRAQTEGLSVEDSAIQALSEIGDNTTLRYAVQLLTPAHQNCKVNGRTQITKDDIVEVNGLFLDAKRSAKFLQEENTKYMM.

Position 70–77 (70–77 (GPPGTGKT)) interacts with ATP.

The protein belongs to the RuvB family. In terms of assembly, forms homohexameric rings. May form a dodecamer with rept made of two stacked hexameric rings. Component of the chromatin remodeling Ino80 complex.

The protein localises to the nucleus. The enzyme catalyses ATP + H2O = ADP + phosphate + H(+). Functionally, acts as a transcriptional coactivator in Wg signaling. Its function is as follows. Proposed core component of the chromatin remodeling Ino80 complex which is involved in transcriptional regulation, DNA replication and probably DNA repair. This chain is RuvB-like helicase 1, found in Aedes aegypti (Yellowfever mosquito).